A 395-amino-acid chain; its full sequence is Phosphoglycerate kinase (395 aa).

Residues 21–23 (DLN), Arg-36, 59–62 (HLGR), Arg-113, and Arg-146 each bind substrate. Residues Lys-197, Glu-324, and 350-353 (GGDT) contribute to the ATP site.

This sequence belongs to the phosphoglycerate kinase family. As to quaternary structure, monomer.

The protein resides in the cytoplasm. The catalysed reaction is (2R)-3-phosphoglycerate + ATP = (2R)-3-phospho-glyceroyl phosphate + ADP. The protein operates within carbohydrate degradation; glycolysis; pyruvate from D-glyceraldehyde 3-phosphate: step 2/5. This chain is Phosphoglycerate kinase, found in Acinetobacter baumannii (strain ATCC 17978 / DSM 105126 / CIP 53.77 / LMG 1025 / NCDC KC755 / 5377).